The sequence spans 345 residues: S-adenosylmethionine:tRNA ribosyltransferase-isomerase (345 aa).

Belongs to the QueA family. In terms of assembly, monomer.

Its subcellular location is the cytoplasm. The catalysed reaction is 7-aminomethyl-7-carbaguanosine(34) in tRNA + S-adenosyl-L-methionine = epoxyqueuosine(34) in tRNA + adenine + L-methionine + 2 H(+). It participates in tRNA modification; tRNA-queuosine biosynthesis. Functionally, transfers and isomerizes the ribose moiety from AdoMet to the 7-aminomethyl group of 7-deazaguanine (preQ1-tRNA) to give epoxyqueuosine (oQ-tRNA). The polypeptide is S-adenosylmethionine:tRNA ribosyltransferase-isomerase (Helicobacter acinonychis (strain Sheeba)).